Reading from the N-terminus, the 98-residue chain is MAAEPLTELEAAIETVVTTFFTFAGREGRKGSLSVNEFKELVTQQLPHLLKDVGSLDEKMKSLDVNQDSELKFSEYWRLIGELAKEIRKEKALEIRKK.

The 36-residue stretch at 18 to 53 (TTFFTFAGREGRKGSLSVNEFKELVTQQLPHLLKDV) folds into the EF-hand domain. 7 residues coordinate Ca(2+): Ser32, Glu37, Asp64, Asn66, Asp68, Glu70, and Glu75. Phosphoserine is present on Ser32.

It belongs to the S-100 family. In terms of assembly, homodimer. Part of a copper-dependent multiprotein complex containing S100A13, FGF1 and SYT1. Interacts with FGF1 and SYT1. Interacts with IL1A.

Its subcellular location is the cytoplasm. The protein resides in the secreted. In terms of biological role, plays a role in the export of proteins that lack a signal peptide and are secreted by an alternative pathway. Binds two calcium ions per subunit. Binds one copper ion. Binding of one copper ion does not interfere with calcium binding. Required for the copper-dependent stress-induced export of IL1A and FGF1. The calcium-free protein binds to lipid vesicles containing phosphatidylserine, but not to vesicles containing phosphatidylcholine. This is Protein S100-A13 (S100A13) from Bos taurus (Bovine).